We begin with the raw amino-acid sequence, 222 residues long: Sororin-like protein (222 aa).

A disordered region spans residues Met-1 to Ser-189. A compositionally biased stretch (low complexity) spans Ser-24–Ser-33. A compositionally biased stretch (basic and acidic residues) spans Arg-47–Asp-60. Residues Ala-88–Ser-105 are compositionally biased toward low complexity. Residues Gly-155 to Ser-162 carry the Nuclear localization signal motif. Residues Lys-167–Thr-179 are compositionally biased toward basic residues. The tract at residues Cys-192–Glu-214 is C-terminal Sororin domain.

The protein belongs to the sororin family.

The protein localises to the nucleus. Functionally, regulator of sister chromatid cohesion in mitosis stabilizing cohesin complex association with chromatin. Antagonizes the action of WAPL proteins (WAPL1 and WAPL2) which stimulates cohesin dissociation from chromatin, particularly during somatic division in root cells and meiocytes during anaphase I. Required for centromeric sister chromatid cohesion during male meiosis (microsporogenesis). Cohesion ensures that chromosome partitioning is accurate in dividing cells and may play an important role in DNA repair. In Arabidopsis thaliana (Mouse-ear cress), this protein is Sororin-like protein.